The following is a 462-amino-acid chain: Kinetochore protein Nuf2-A (462 aa).

Coiled-coil stretches lie at residues 143 to 277 (SSYK…DKCD) and 308 to 461 (EIHR…RLSR). Positions 239 to 259 (RMKSQIVESPEQRKSKTERMK) are disordered. The segment covering 248–259 (PEQRKSKTERMK) has biased composition (basic and acidic residues).

Belongs to the NUF2 family. In terms of assembly, component of the NDC80 complex, which is composed of ndc80, cdca1, spbc24 and spbc25. The NDC80 complex interacts with mis12 and zwint.

The protein resides in the nucleus. Its subcellular location is the chromosome. It localises to the centromere. The protein localises to the kinetochore. Its function is as follows. Acts as a component of the essential kinetochore-associated NDC80 complex, which is required for chromosome segregation and spindle checkpoint activity. Required for kinetochore integrity and the organization of stable microtubule binding sites in the outer plate of the kinetochore. The NDC80 complex synergistically enhances the affinity of the SKA1 complex for microtubules and may allow the NDC80 complex to track depolymerizing microtubules. In Xenopus laevis (African clawed frog), this protein is Kinetochore protein Nuf2-A (nuf2-a).